A 166-amino-acid chain; its full sequence is 2S seed storage protein 4 (166 aa).

An N-terminal signal peptide occupies residues 1-21 (MANKLFLVCAALALCFILTNA). 2 propeptides span residues 22–37 (SVYR…DASN) and 73–88 (GPSL…DIEN).

It belongs to the 2S seed storage albumins family. As to quaternary structure, the mature protein consists of a small and a large chain linked by disulfide bonds.

In terms of biological role, this is a 2S seed storage protein. The sequence is that of 2S seed storage protein 4 (AT2S4) from Arabidopsis thaliana (Mouse-ear cress).